Here is a 710-residue protein sequence, read N- to C-terminus: Early transcription factor 82 kDa subunit (710 aa).

It belongs to the poxviridae VETF large subunit family. Heterodimer of a 70 kDa and a 82 kDa subunit. Part of the early transcription complex composed of ETF, RAP94/OPG109, and the DNA-directed RNA polymerase.

The protein resides in the virion. Functionally, acts with RNA polymerase to initiate transcription from early gene promoters. Is recruited by the RPO-associated protein of 94 kDa RAP94/OPG109 to form the early transcription complex, which also contains the core RNA polymerase. ETF heterodimer binds to early gene promoters. In Vaccinia virus (strain Ankara) (VACV), this protein is Early transcription factor 82 kDa subunit (OPG133).